The sequence spans 642 residues: Chaperone protein DnaK (642 aa).

Threonine 198 carries the phosphothreonine; by autocatalysis modification. The interval alanine 602–aspartate 642 is disordered.

It belongs to the heat shock protein 70 family.

Functionally, acts as a chaperone. The sequence is that of Chaperone protein DnaK from Dichelobacter nodosus (strain VCS1703A).